Here is a 188-residue protein sequence, read N- to C-terminus: dCTP deaminase (188 aa).

DCTP-binding positions include 111 to 116 (KSTYAR), 135 to 137 (TLE), glutamine 156, tyrosine 170, lysine 179, and glutamine 180. Glutamate 137 functions as the Proton donor/acceptor in the catalytic mechanism.

It belongs to the dCTP deaminase family. Homotrimer.

The catalysed reaction is dCTP + H2O + H(+) = dUTP + NH4(+). It participates in pyrimidine metabolism; dUMP biosynthesis; dUMP from dCTP (dUTP route): step 1/2. Functionally, catalyzes the deamination of dCTP to dUTP. This is dCTP deaminase from Orientia tsutsugamushi (strain Boryong) (Rickettsia tsutsugamushi).